Reading from the N-terminus, the 319-residue chain is tRNA-cytidine(32) 2-sulfurtransferase (319 aa).

The PP-loop motif signature appears at 43-48 (SGGKDS). [4Fe-4S] cluster-binding residues include Cys118, Cys121, and Cys209.

This sequence belongs to the TtcA family. As to quaternary structure, homodimer. Requires Mg(2+) as cofactor. [4Fe-4S] cluster is required as a cofactor.

It is found in the cytoplasm. The catalysed reaction is cytidine(32) in tRNA + S-sulfanyl-L-cysteinyl-[cysteine desulfurase] + AH2 + ATP = 2-thiocytidine(32) in tRNA + L-cysteinyl-[cysteine desulfurase] + A + AMP + diphosphate + H(+). Its pathway is tRNA modification. Its function is as follows. Catalyzes the ATP-dependent 2-thiolation of cytidine in position 32 of tRNA, to form 2-thiocytidine (s(2)C32). The sulfur atoms are provided by the cysteine/cysteine desulfurase (IscS) system. The protein is tRNA-cytidine(32) 2-sulfurtransferase of Neisseria meningitidis serogroup C (strain 053442).